The sequence spans 242 residues: Serine hydrolase cnsH (242 aa).

Residues Ser56, Asp138, and His216 each act as charge relay system in the active site.

It belongs to the AB hydrolase 3 family.

It functions in the pathway alkaloid biosynthesis. Its function is as follows. Serine hydrolase; part of the gene cluster that mediates the biosynthesis of communesins, a prominent class of indole alkaloids with great potential as pharmaceuticals. Communesins are biosynthesized by the coupling of tryptamine and aurantioclavine, two building blocks derived from L-tryptophan. The L-tryptophan decarboxylase cnsB converts L-tryptophan to tryptamine, whereas the tryptophan dimethylallyltransferase cnsF converts L-tryptophan to 4-dimethylallyl tryptophan which is further transformed to aurantioclavine by the aurantioclavine synthase cnsA, probably aided by the catalase cnsD. The cytochrome P450 monooxygenase cnsC catalyzes the heterodimeric coupling between the two different indole moieties, tryptamine and aurantioclavine, to construct vicinal quaternary stereocenters and yield the heptacyclic communesin scaffold. The O-methyltransferase cnsE then methylates the communesin scaffold to produce communesin K, the simplest characterized communesin that contains the heptacyclic core. The dioxygenase cnsJ converts communesin K into communesin I. Acylation to introduce the hexadienyl group at position N16 of communesin I by the acyltransferase cnsK leads to the production of communesin B. The hexadienyl group is produced by the highly reducing polyketide synthase cnsI, before being hydrolytically removed from cnsI by the serine hydrolase cnsH, converted into hexadienyl-CoA by the CoA ligase cnsG, and then transferred to communesin I by cnsK. Surprisingly, cnsK may also be a promiscuous acyltransferase that can tolerate a range of acyl groups, including acetyl-, propionyl-, and butyryl-CoA, which lead to communesins A, G and H respectively. The roles of the alpha-ketoglutarate-dependent dioxygenases cnsM and cnsP have still to be determined. This chain is Serine hydrolase cnsH, found in Penicillium expansum (Blue mold rot fungus).